The primary structure comprises 231 residues: Membrane protein YknW (231 aa).

A run of 5 helical transmembrane segments spans residues 38–58, 93–113, 128–148, 171–191, and 205–225; these read VWGP…LQSL, GAII…WLCV, LSLF…IVAF, LASV…LLAI, and WISA…SGLI.

Interacts with a complex composed of YknX, YknY and YknZ.

The protein localises to the cell membrane. In terms of biological role, part of an unusual four-component transporter, which is required for protection against the killing factor SdpC (sporulation-delaying protein). Has a role in the assembly of the YknXYZ complex. The polypeptide is Membrane protein YknW (yknW) (Bacillus subtilis (strain 168)).